We begin with the raw amino-acid sequence, 203 residues long: ATP-dependent Clp protease proteolytic subunit (203 aa).

The Nucleophile role is filled by S107. The active site involves H132.

It belongs to the peptidase S14 family. As to quaternary structure, fourteen ClpP subunits assemble into 2 heptameric rings which stack back to back to give a disk-like structure with a central cavity, resembling the structure of eukaryotic proteasomes.

The protein localises to the cytoplasm. It carries out the reaction Hydrolysis of proteins to small peptides in the presence of ATP and magnesium. alpha-casein is the usual test substrate. In the absence of ATP, only oligopeptides shorter than five residues are hydrolyzed (such as succinyl-Leu-Tyr-|-NHMec, and Leu-Tyr-Leu-|-Tyr-Trp, in which cleavage of the -Tyr-|-Leu- and -Tyr-|-Trp bonds also occurs).. In terms of biological role, cleaves peptides in various proteins in a process that requires ATP hydrolysis. Has a chymotrypsin-like activity. Plays a major role in the degradation of misfolded proteins. The polypeptide is ATP-dependent Clp protease proteolytic subunit (Shewanella piezotolerans (strain WP3 / JCM 13877)).